The sequence spans 520 residues: Cyclic AMP-responsive element-binding protein 3-like protein 2 (520 aa).

At 1 to 379 (MEVLESGEQG…KLAGTQTGTC (379 aa)) the chain is on the cytoplasmic side. The residue at position 93 (serine 93) is a Phosphoserine. Lysine 178 is covalently cross-linked (Glycyl lysine isopeptide (Lys-Gly) (interchain with G-Cter in SUMO2)). At serine 191 the chain carries Phosphoserine. The interval 195–264 (APVDHLHLPP…PHKLQGSGPL (70 aa)) is disordered. 2 stretches are compositionally biased toward low complexity: residues 208–220 (SSHG…SLSP) and 234–255 (SPSR…LTAP). The bZIP domain maps to 294-357 (ALKKIRRKIK…RTLLQQLQKL (64 aa)). The tract at residues 296-325 (KKIRRKIKNKISAQESRRKKKEYMDSLEKK) is basic motif. The interval 336 to 357 (LRKKVEVLENTNRTLLQQLQKL) is leucine-zipper. The helical; Signal-anchor for type II membrane protein transmembrane segment at 380-400 (LMVVVLCFAVAFGSFFQGYGP) threads the bilayer. The Lumenal portion of the chain corresponds to 401–520 (YPSATKMALP…ELDRRVNTTF (120 aa)). The S1P recognition signature appears at 427–430 (RNLL). N-linked (GlcNAc...) asparagine glycans are attached at residues asparagine 480, asparagine 504, and asparagine 517.

This sequence belongs to the bZIP family. ATF subfamily. In terms of assembly, binds DNA as a dimer. In terms of processing, upon ER stress, translocated to the Golgi apparatus, where it is processed by regulated intramembrane proteolysis (RIP) to release the cytosol-facing N-terminal transcription factor domain. The cleavage is performed sequentially by site-1 and site-2 proteases (S1P/MBTPS1 and S2P/MBTPS2). N-glycosylated. Post-translationally, ubiquitinated by HRD1/SYVN1; undergoes 'Lys-48'-linked ubiquitination, followed by rapid proteasomal degradation under normal conditions. Upon ER stress, SYVN1 E3 ubiquitin-protein ligase dissociates from its substrate, ubiquitination does not occur and CREB3L2 is stabilized. In terms of tissue distribution, widely expressed with highest levels in placenta, lung, spleen and intestine, and lowest levels in heart, brain, skeletal muscle, thymus, colon and leukocytes. In fetal tissues, the weakest expression is detected in brain and heart.

The protein resides in the endoplasmic reticulum membrane. The protein localises to the nucleus. Functionally, transcription factor involved in unfolded protein response (UPR). In the absence of endoplasmic reticulum (ER) stress, inserted into ER membranes, with N-terminal DNA-binding and transcription activation domains oriented toward the cytosolic face of the membrane. In response to ER stress, transported to the Golgi, where it is cleaved in a site-specific manner by resident proteases S1P/MBTPS1 and S2P/MBTPS2. The released N-terminal cytosolic domain is translocated to the nucleus to effect transcription of specific target genes. Plays a critical role in chondrogenesis by activating the transcription of SEC23A, which promotes the transport and secretion of cartilage matrix proteins, and possibly that of ER biogenesis-related genes. In a neuroblastoma cell line, protects cells from ER stress-induced death. In vitro activates transcription of target genes via direct binding to the CRE site. The chain is Cyclic AMP-responsive element-binding protein 3-like protein 2 (CREB3L2) from Homo sapiens (Human).